The sequence spans 200 residues: Ribonuclease HII (200 aa).

The RNase H type-2 domain maps to 11–200 (QSIAGVDEVG…VRRALISLTG (190 aa)). 3 residues coordinate a divalent metal cation: Asp17, Glu18, and Asp109.

This sequence belongs to the RNase HII family. Requires Mn(2+) as cofactor. The cofactor is Mg(2+).

The protein resides in the cytoplasm. It carries out the reaction Endonucleolytic cleavage to 5'-phosphomonoester.. Endonuclease that specifically degrades the RNA of RNA-DNA hybrids. The chain is Ribonuclease HII from Hamiltonella defensa subsp. Acyrthosiphon pisum (strain 5AT).